We begin with the raw amino-acid sequence, 90 residues long: Small ribosomal subunit protein uS15 (90 aa).

Belongs to the universal ribosomal protein uS15 family. As to quaternary structure, part of the 30S ribosomal subunit. Forms a bridge to the 50S subunit in the 70S ribosome, contacting the 23S rRNA.

Functionally, one of the primary rRNA binding proteins, it binds directly to 16S rRNA where it helps nucleate assembly of the platform of the 30S subunit by binding and bridging several RNA helices of the 16S rRNA. Its function is as follows. Forms an intersubunit bridge (bridge B4) with the 23S rRNA of the 50S subunit in the ribosome. The chain is Small ribosomal subunit protein uS15 from Wolbachia sp. subsp. Drosophila simulans (strain wRi).